A 166-amino-acid chain; its full sequence is NAD(P)H-quinone oxidoreductase subunit I, chloroplastic (166 aa).

2 consecutive 4Fe-4S ferredoxin-type domains span residues 55 to 84 and 95 to 124; these read GRIH…VDWK and LNYS…MTEE. 8 residues coordinate [4Fe-4S] cluster: cysteine 64, cysteine 67, cysteine 70, cysteine 74, cysteine 104, cysteine 107, cysteine 110, and cysteine 114.

The protein belongs to the complex I 23 kDa subunit family. In terms of assembly, NDH is composed of at least 16 different subunits, 5 of which are encoded in the nucleus. [4Fe-4S] cluster is required as a cofactor.

It is found in the plastid. The protein resides in the chloroplast thylakoid membrane. The catalysed reaction is a plastoquinone + NADH + (n+1) H(+)(in) = a plastoquinol + NAD(+) + n H(+)(out). It catalyses the reaction a plastoquinone + NADPH + (n+1) H(+)(in) = a plastoquinol + NADP(+) + n H(+)(out). Its function is as follows. NDH shuttles electrons from NAD(P)H:plastoquinone, via FMN and iron-sulfur (Fe-S) centers, to quinones in the photosynthetic chain and possibly in a chloroplast respiratory chain. The immediate electron acceptor for the enzyme in this species is believed to be plastoquinone. Couples the redox reaction to proton translocation, and thus conserves the redox energy in a proton gradient. The protein is NAD(P)H-quinone oxidoreductase subunit I, chloroplastic of Enydra sessilis (Smallray swampwort).